The chain runs to 179 residues: MSPDSCPLVKNILLLDSEGKRVAVKYYSDDWPTNAAKLSFEKYVFSKTSKTNARTEAEITLLDSNIIVYKFAQDLHFFVTGGENENELILASVLQGFFDAVALLLRSNVEKMEALENLDLIFLCLDEMVDQGVVLETDPNVIAGKVAMQSTEASGSLSEQTLTQALATAREHLARSLLT.

It belongs to the adaptor complexes small subunit family. As to quaternary structure, oligomeric complex that consists of at least the alpha, beta, beta', gamma, delta, epsilon and zeta subunits.

The protein resides in the cytoplasm. It is found in the golgi apparatus membrane. The protein localises to the cytoplasmic vesicle. It localises to the COPI-coated vesicle membrane. Its function is as follows. The coatomer is a cytosolic protein complex that binds to dilysine motifs and reversibly associates with Golgi non-clathrin-coated vesicles, which further mediate biosynthetic protein transport from the ER, via the Golgi up to the trans Golgi network. Coatomer complex is required for budding from Golgi membranes, and is essential for the retrograde Golgi-to-ER transport of dilysine-tagged proteins. The zeta subunit may be involved in regulating the coat assembly and, hence, the rate of biosynthetic protein transport due to its association-dissociation properties with the coatomer complex. This is Coatomer subunit zeta-2 from Arabidopsis thaliana (Mouse-ear cress).